The following is a 711-amino-acid chain: Polyribonucleotide nucleotidyltransferase (711 aa).

Residues D491 and D497 each coordinate Mg(2+). Residues P559–I618 form the KH domain. The region spanning G628–K696 is the S1 motif domain.

The protein belongs to the polyribonucleotide nucleotidyltransferase family. It depends on Mg(2+) as a cofactor.

It is found in the cytoplasm. The catalysed reaction is RNA(n+1) + phosphate = RNA(n) + a ribonucleoside 5'-diphosphate. Involved in mRNA degradation. Catalyzes the phosphorolysis of single-stranded polyribonucleotides processively in the 3'- to 5'-direction. The chain is Polyribonucleotide nucleotidyltransferase from Janthinobacterium sp. (strain Marseille) (Minibacterium massiliensis).